The primary structure comprises 1088 residues: DNA ligase 4 (1088 aa).

2 disordered regions span residues 1–56 (MALS…KFND) and 73–117 (TTTT…TTTT). Composition is skewed to low complexity over residues 25-53 (DFKNQQQINTSKTTNNNNNINNKNNYNNK) and 73-90 (TTTTTTKNTSTNSNINKT). Residues 95-105 (DDIFDDEDEDS) are compositionally biased toward acidic residues. The ATP site is built by E414, K416, R421, E467, F514, E574, K579, K596, and K598. The active-site N6-AMP-lysine intermediate is the K416. E467 contacts Mg(2+). Residue E574 participates in Mg(2+) binding. BRCT domains are found at residues 827-917 (PTQN…PKYM) and 984-1088 (CWWS…EILD).

It belongs to the ATP-dependent DNA ligase family. Requires Mg(2+) as cofactor.

The protein resides in the nucleus. It catalyses the reaction ATP + (deoxyribonucleotide)n-3'-hydroxyl + 5'-phospho-(deoxyribonucleotide)m = (deoxyribonucleotide)n+m + AMP + diphosphate.. Its function is as follows. DNA ligase involved in DNA non-homologous end joining (NHEJ); required for double-strand break (DSB) repair. The protein is DNA ligase 4 (lig4) of Dictyostelium discoideum (Social amoeba).